The chain runs to 493 residues: Glutamyl-tRNA(Gln) amidotransferase subunit A (493 aa).

Residues K79 and S159 each act as charge relay system in the active site. S183 (acyl-ester intermediate) is an active-site residue.

The protein belongs to the amidase family. GatA subfamily. Heterotrimer of A, B and C subunits.

It carries out the reaction L-glutamyl-tRNA(Gln) + L-glutamine + ATP + H2O = L-glutaminyl-tRNA(Gln) + L-glutamate + ADP + phosphate + H(+). Functionally, allows the formation of correctly charged Gln-tRNA(Gln) through the transamidation of misacylated Glu-tRNA(Gln) in organisms which lack glutaminyl-tRNA synthetase. The reaction takes place in the presence of glutamine and ATP through an activated gamma-phospho-Glu-tRNA(Gln). This Rhizobium johnstonii (strain DSM 114642 / LMG 32736 / 3841) (Rhizobium leguminosarum bv. viciae) protein is Glutamyl-tRNA(Gln) amidotransferase subunit A.